A 277-amino-acid chain; its full sequence is Putative serine/threonine-protein kinase PRKY (277 aa).

The span at Met1–Ala12 shows a compositional bias: low complexity. The segment at Met1–Glu40 is disordered. A Protein kinase domain is found at Cys49–Met277. ATP contacts are provided by residues Met55–Val63 and Lys78. Catalysis depends on Asp172, which acts as the Proton acceptor. Residue Thr203 is modified to Phosphothreonine.

It belongs to the protein kinase superfamily. AGC Ser/Thr protein kinase family. cAMP subfamily. In terms of tissue distribution, ubiquitous.

It catalyses the reaction L-seryl-[protein] + ATP = O-phospho-L-seryl-[protein] + ADP + H(+). It carries out the reaction L-threonyl-[protein] + ATP = O-phospho-L-threonyl-[protein] + ADP + H(+). This is Putative serine/threonine-protein kinase PRKY (PRKY) from Homo sapiens (Human).